Here is a 183-residue protein sequence, read N- to C-terminus: MKAYLALISAAVIGLAACSQEPAAPAAEATPAAEAPASEAPAAEAAPADAAEAPAAGNCAATVESNDNMQFNTKDIQVSKACKEFTITLKHTGTQPKASMGHNLVIAKAEDMDGVFKDGVGAADTDYVKPDDARVVAHTKLIGGGEESSLTLDPAKLADGDYKFACTFPGHGALMNGKVTLVD.

Residues 1–17 form the signal peptide; that stretch reads MKAYLALISAAVIGLAA. Cysteine 18 carries the N-palmitoyl cysteine lipid modification. A lipid anchor (S-diacylglycerol cysteine) is attached at cysteine 18. The interval 27 to 51 is disordered; sequence AEATPAAEAPASEAPAAEAAPADAA. In terms of domain architecture, Plastocyanin-like spans 57-183; it reads GNCAATVESN…LMNGKVTLVD (127 aa). Cu cation-binding residues include histidine 102, cysteine 166, histidine 171, and methionine 175.

The cofactor is Cu cation.

It is found in the cell outer membrane. The protein is Outer membrane protein H.8 of Neisseria meningitidis serogroup C / serotype 2a (strain ATCC 700532 / DSM 15464 / FAM18).